A 623-amino-acid chain; its full sequence is Xaa-Pro aminopeptidase 1 (623 aa).

A peptide is bound at residue arginine 77. The residue at position 304 (lysine 304) is an N6-acetyllysine. Histidine 395 is an a peptide binding site. Mn(2+) is bound by residues aspartate 415, aspartate 426, and histidine 489. Histidine 489, histidine 498, and glutamate 523 together coordinate a peptide. Positions 523 and 537 each coordinate Mn(2+).

This sequence belongs to the peptidase M24B family. As to quaternary structure, homodimer. It depends on Mn(2+) as a cofactor. In terms of tissue distribution, expressed in all tissues tested, including liver, adrenal decapsular tissue, adrenal capsular tissue, corpus luteum, testis, submandibular gland, thymus, brain, cerebellum and heart. Highest levels in testis.

It is found in the cytoplasm. It carries out the reaction Release of any N-terminal amino acid, including proline, that is linked to proline, even from a dipeptide or tripeptide.. Its activity is regulated as follows. Inhibited by inositol hexakisphosphate. Its function is as follows. Metalloaminopeptidase that catalyzes the removal of a penultimate prolyl residue from the N-termini of peptides, such as Arg-Pro-Pro. Contributes to the degradation of bradykinin. This Rattus norvegicus (Rat) protein is Xaa-Pro aminopeptidase 1.